The primary structure comprises 214 residues: Cell division protein DamX (214 aa).

2 stretches are compositionally biased toward polar residues: residues 1 to 14 (GSGTPTEAQTQPQQ) and 43 to 53 (QGMTGAASTLP). A disordered region spans residues 1–133 (GSGTPTEAQT…SVQSAPGSHY (133 aa)). Residues 44 to 65 (GMTGAASTLPTAPATVMSGAAA) form a helical membrane-spanning segment. 2 stretches are compositionally biased toward low complexity: residues 78 to 97 (QQHKTPAKTAAAKPTATQHK) and 110 to 131 (SSTAKAGAVASSGSSVQSAPGS). The 78-residue stretch at 127–204 (SAPGSHYTLQ…VQAKKPWVRP (78 aa)) folds into the SPOR domain.

Belongs to the DamX family.

It localises to the cell inner membrane. Non-essential cell division protein. In Serratia marcescens, this protein is Cell division protein DamX.